Consider the following 136-residue polypeptide: Holo-[acyl-carrier-protein] synthase (136 aa).

Mg(2+)-binding residues include Asp8 and Glu57.

This sequence belongs to the P-Pant transferase superfamily. AcpS family. Requires Mg(2+) as cofactor.

It is found in the cytoplasm. The catalysed reaction is apo-[ACP] + CoA = holo-[ACP] + adenosine 3',5'-bisphosphate + H(+). In terms of biological role, transfers the 4'-phosphopantetheine moiety from coenzyme A to a Ser of acyl-carrier-protein. The protein is Holo-[acyl-carrier-protein] synthase of Methylorubrum populi (strain ATCC BAA-705 / NCIMB 13946 / BJ001) (Methylobacterium populi).